We begin with the raw amino-acid sequence, 466 residues long: Serine/threonine-protein kinase SSN3 (466 aa).

The 365-residue stretch at 32 to 396 (YKILGFISSG…ARDALRHPWF (365 aa)) folds into the Protein kinase domain. 38 to 46 (ISSGTYGRV) contacts ATP. Residues 58–105 (ASAKSALPSSTRAALSLPKDKLPSPSFTEDSDPLNNPEMCMRPGDRPA) are disordered. Residue Lys114 coordinates ATP. The active-site Proton acceptor is the Asp216. The disordered stretch occupies residues 421-466 (THEDNGDAKMGSLPQSMAGGRLPSSSNFRPASGNIVQPAARKKARI).

The protein belongs to the protein kinase superfamily. CMGC Ser/Thr protein kinase family. CDC2/CDKX subfamily. As to quaternary structure, component of the SRB8-11 complex, a regulatory module of the Mediator complex. It depends on Mg(2+) as a cofactor.

It is found in the nucleus. It catalyses the reaction L-seryl-[protein] + ATP = O-phospho-L-seryl-[protein] + ADP + H(+). It carries out the reaction L-threonyl-[protein] + ATP = O-phospho-L-threonyl-[protein] + ADP + H(+). The catalysed reaction is [DNA-directed RNA polymerase] + ATP = phospho-[DNA-directed RNA polymerase] + ADP + H(+). Functionally, component of the SRB8-11 complex. The SRB8-11 complex is a regulatory module of the Mediator complex which is itself involved in regulation of basal and activated RNA polymerase II-dependent transcription. The SRB8-11 complex may be involved in the transcriptional repression of a subset of genes regulated by Mediator. It may inhibit the association of the Mediator complex with RNA polymerase II to form the holoenzyme complex. The SRB8-11 complex phosphorylates the C-terminal domain (CTD) of the largest subunit of RNA polymerase II. This chain is Serine/threonine-protein kinase SSN3 (SSN3), found in Cryptococcus neoformans var. neoformans serotype D (strain B-3501A) (Filobasidiella neoformans).